The following is a 449-amino-acid chain: Hyaluronidase (449 aa).

The N-terminal stretch at 1–23 is a signal peptide; the sequence is MYHLWIKCLAAWIFLKRFNGVHV. Intrachain disulfides connect Cys47-Cys340 and Cys211-Cys227. N-linked (GlcNAc...) asparagine glycosylation is found at Asn67 and Asn103. The active-site Proton donor is the Glu135. N-linked (GlcNAc...) asparagine glycosylation is present at Asn153. Asn357 carries N-linked (GlcNAc...) asparagine glycosylation. 3 cysteine pairs are disulfide-bonded: Cys365-Cys376, Cys370-Cys427, and Cys429-Cys438. A glycan (N-linked (GlcNAc...) asparagine) is linked at Asn401. The 12-residue stretch at 427 to 438 folds into the EGF-like domain; that stretch reads CQCYQGWQGLYC.

The protein belongs to the glycosyl hydrolase 56 family. As to quaternary structure, monomer. Expressed by the venom gland.

The protein resides in the secreted. The catalysed reaction is Random hydrolysis of (1-&gt;4)-linkages between N-acetyl-beta-D-glucosamine and D-glucuronate residues in hyaluronate.. Its function is as follows. Snake venom endo-hyaluronidase that degrades hyaluronan to smaller oligosaccharide fragments. In venom, it is not toxic by itself, but increases the diffusion of other venom proteins by degrading the extracellular matrix. In addition, it displays antiedematogenic activity. This chain is Hyaluronidase, found in Echis ocellatus (Ocellated saw-scaled viper).